The chain runs to 129 residues: Protein GLUTAMINE DUMPER 2 (129 aa).

Residues 1–34 (MQTMEGRQYNYQDSINASSSMVVPHSPWHSPVPY) are Extracellular-facing. The chain crosses the membrane as a helical span at residues 35–55 (LFGGLAAMLALICVALLILAC). Topologically, residues 56-129 (SYWRLSGSAE…DHNEEEGRRG (74 aa)) are cytoplasmic. Residues 66-89 (RDLEAGDDAKPDNDTNKTKHTEMP) are disordered. The VIMAG motif lies at 94–98 (VIMAG). Residues 106–129 (ATPATRSEQSCTCGDHNEEEGRRG) are disordered. The segment covering 120–129 (DHNEEEGRRG) has biased composition (basic and acidic residues).

The protein belongs to the GLUTAMINE DUMPER 1 (TC 9.B.60) family. Expressed in the vascular tissues.

It localises to the membrane. In terms of biological role, probable subunit of an amino acid transporter involved in the regulation of the amino acid metabolism. Stimulates amino acid export by activating nonselective amino acid facilitators. The chain is Protein GLUTAMINE DUMPER 2 (GDU2) from Arabidopsis thaliana (Mouse-ear cress).